A 456-amino-acid polypeptide reads, in one-letter code: Bifunctional protein GlmU (456 aa).

Residues 1-228 (MTLPLHVLIL…PQDVEGANDP (228 aa)) form a pyrophosphorylase region. Residues 10 to 13 (LAAG), K24, Q76, 81 to 82 (GT), 103 to 105 (YGD), G138, E153, N168, and N226 contribute to the UDP-N-acetyl-alpha-D-glucosamine site. D105 serves as a coordination point for Mg(2+). Position 226 (N226) interacts with Mg(2+). The segment at 229 to 249 (WQLAQLERAWQLRAARTLCLQ) is linker. Positions 250-456 (GVRMADPARV…GWKRPTKKSP (207 aa)) are N-acetyltransferase. R332 and K350 together coordinate UDP-N-acetyl-alpha-D-glucosamine. H362 functions as the Proton acceptor in the catalytic mechanism. Positions 365 and 376 each coordinate UDP-N-acetyl-alpha-D-glucosamine. Residues A379, 385–386 (NY), S404, A422, and R439 contribute to the acetyl-CoA site.

In the N-terminal section; belongs to the N-acetylglucosamine-1-phosphate uridyltransferase family. It in the C-terminal section; belongs to the transferase hexapeptide repeat family. As to quaternary structure, homotrimer. Mg(2+) is required as a cofactor.

It is found in the cytoplasm. It carries out the reaction alpha-D-glucosamine 1-phosphate + acetyl-CoA = N-acetyl-alpha-D-glucosamine 1-phosphate + CoA + H(+). It catalyses the reaction N-acetyl-alpha-D-glucosamine 1-phosphate + UTP + H(+) = UDP-N-acetyl-alpha-D-glucosamine + diphosphate. Its pathway is nucleotide-sugar biosynthesis; UDP-N-acetyl-alpha-D-glucosamine biosynthesis; N-acetyl-alpha-D-glucosamine 1-phosphate from alpha-D-glucosamine 6-phosphate (route II): step 2/2. The protein operates within nucleotide-sugar biosynthesis; UDP-N-acetyl-alpha-D-glucosamine biosynthesis; UDP-N-acetyl-alpha-D-glucosamine from N-acetyl-alpha-D-glucosamine 1-phosphate: step 1/1. It functions in the pathway bacterial outer membrane biogenesis; LPS lipid A biosynthesis. Functionally, catalyzes the last two sequential reactions in the de novo biosynthetic pathway for UDP-N-acetylglucosamine (UDP-GlcNAc). The C-terminal domain catalyzes the transfer of acetyl group from acetyl coenzyme A to glucosamine-1-phosphate (GlcN-1-P) to produce N-acetylglucosamine-1-phosphate (GlcNAc-1-P), which is converted into UDP-GlcNAc by the transfer of uridine 5-monophosphate (from uridine 5-triphosphate), a reaction catalyzed by the N-terminal domain. This Xanthomonas axonopodis pv. citri (strain 306) protein is Bifunctional protein GlmU.